The following is a 132-amino-acid chain: Small ribosomal subunit protein uS8 (132 aa).

It belongs to the universal ribosomal protein uS8 family. Part of the 30S ribosomal subunit. Contacts proteins S5 and S12.

Its function is as follows. One of the primary rRNA binding proteins, it binds directly to 16S rRNA central domain where it helps coordinate assembly of the platform of the 30S subunit. The chain is Small ribosomal subunit protein uS8 from Rickettsia conorii (strain ATCC VR-613 / Malish 7).